A 298-amino-acid polypeptide reads, in one-letter code: Probable prolyl 4-hydroxylase 4 (298 aa).

The Cytoplasmic segment spans residues 1-6 (MARRGL). The chain crosses the membrane as a helical; Signal-anchor for type II membrane protein span at residues 7–25 (LISFFAIFSVLLQSSTSLI). At 26 to 298 (SSSSVFVNPS…GYCRRSCKAC (273 aa)) the chain is on the lumenal side. An N-linked (GlcNAc...) asparagine glycan is attached at N77. The region spanning 120–245 (NGEDIQVLRY…KWSATKWIHV (126 aa)) is the Fe2OG dioxygenase domain. Fe cation contacts are provided by H138 and D140. N164 is a glycosylation site (N-linked (GlcNAc...) asparagine). H226 serves as a coordination point for Fe cation. K236 serves as a coordination point for 2-oxoglutarate. N257 and N262 each carry an N-linked (GlcNAc...) asparagine glycan. The 41-residue stretch at 258-298 (CTDMNESCERWAVLGECTKNPEYMVGTTELPGYCRRSCKAC) folds into the ShKT domain. Intrachain disulfides connect C258-C298, C265-C291, and C274-C295.

Belongs to the P4HA family. Requires Fe(2+) as cofactor. It depends on L-ascorbate as a cofactor.

Its subcellular location is the endoplasmic reticulum membrane. It carries out the reaction L-prolyl-[collagen] + 2-oxoglutarate + O2 = trans-4-hydroxy-L-prolyl-[collagen] + succinate + CO2. Functionally, catalyzes the post-translational formation of 4-hydroxyproline in -Xaa-Pro-Gly- sequences in proline-rich peptide sequences of plant glycoproteins and other proteins. Hydroxyprolines are important constituent of many plant cell wall glycoproteins such as extensins, hydroxyproline-rich glycoproteins, lectins and arabinogalactan proteins. This Arabidopsis thaliana (Mouse-ear cress) protein is Probable prolyl 4-hydroxylase 4.